Consider the following 277-residue polypeptide: Phosphoenolpyruvate synthase regulatory protein (277 aa).

157 to 164 (GVSRCGKT) serves as a coordination point for ADP.

This sequence belongs to the pyruvate, phosphate/water dikinase regulatory protein family. PSRP subfamily.

The catalysed reaction is [pyruvate, water dikinase] + ADP = [pyruvate, water dikinase]-phosphate + AMP + H(+). It carries out the reaction [pyruvate, water dikinase]-phosphate + phosphate + H(+) = [pyruvate, water dikinase] + diphosphate. Its function is as follows. Bifunctional serine/threonine kinase and phosphorylase involved in the regulation of the phosphoenolpyruvate synthase (PEPS) by catalyzing its phosphorylation/dephosphorylation. This Salmonella agona (strain SL483) protein is Phosphoenolpyruvate synthase regulatory protein.